The sequence spans 152 residues: Peptide deformylase (152 aa).

2 residues coordinate Fe cation: cysteine 91 and histidine 133. The active site involves glutamate 134. Histidine 137 is a binding site for Fe cation.

Belongs to the polypeptide deformylase family. Requires Fe(2+) as cofactor.

It carries out the reaction N-terminal N-formyl-L-methionyl-[peptide] + H2O = N-terminal L-methionyl-[peptide] + formate. Functionally, removes the formyl group from the N-terminal Met of newly synthesized proteins. Requires at least a dipeptide for an efficient rate of reaction. N-terminal L-methionine is a prerequisite for activity but the enzyme has broad specificity at other positions. The chain is Peptide deformylase from Wigglesworthia glossinidia brevipalpis.